The chain runs to 430 residues: MNFVEELRWRGMVHDMMPGTEELLAKEQVTAYVGIDPTADSLHIGHLCGVMILRHFQRCGHKPLALIGGATGMIGDPSGKSAERNLLDEETLRHNQACIKKQLAKFLDFESDAPNRAELVNNYDWMKEFTFLDFAREVGKHITVNYMMAKESVKKRLNGEARDGLSFTEFTYQLLQGYDFLHLYETKGCKLQMGGSDQWGNITTGTELIRRTNGGEAYALTCPLITKADGGKFGKTESGNIWLDPRYTSPYKFYQFWLNVSDADAERYIKIFTSLDKAEIDGLIAEHNEAPHLRVLQKRLAKEVTVMVHSEEDYNAAVDASNILFGNATSDALKKLDEDTLLAVFEGVPQFEISRDALAEGVKAVDLFVDNAAVFASKGEMRKLVQGGGVSLNKEKLAAFDQVITTADLLDEKYLLVQRGKKNYYLIIAK.

L-tyrosine is bound at residue Tyr-32. The 'HIGH' region signature appears at 37–46; the sequence is PTADSLHIGH. The L-tyrosine site is built by Tyr-172 and Gln-176. The short motif at 232 to 236 is the 'KMSKS' region element; it reads KFGKT. Position 235 (Lys-235) interacts with ATP. The 68-residue stretch at 362–429 folds into the S4 RNA-binding domain; that stretch reads VKAVDLFVDN…GKKNYYLIIA (68 aa).

It belongs to the class-I aminoacyl-tRNA synthetase family. TyrS type 1 subfamily. Homodimer.

The protein resides in the cytoplasm. It catalyses the reaction tRNA(Tyr) + L-tyrosine + ATP = L-tyrosyl-tRNA(Tyr) + AMP + diphosphate + H(+). Its function is as follows. Catalyzes the attachment of tyrosine to tRNA(Tyr) in a two-step reaction: tyrosine is first activated by ATP to form Tyr-AMP and then transferred to the acceptor end of tRNA(Tyr). The polypeptide is Tyrosine--tRNA ligase (Bacteroides fragilis (strain ATCC 25285 / DSM 2151 / CCUG 4856 / JCM 11019 / LMG 10263 / NCTC 9343 / Onslow / VPI 2553 / EN-2)).